The chain runs to 908 residues: Protein translocase subunit SecA (908 aa).

ATP-binding positions include Gln87, 105-109, and Asp512; that span reads GEGKT. Residues 876 to 908 are disordered; that stretch reads QAPMIRDGEKVGRNDPCPCGSGRKYKQCHGKLS. Residues Cys892, Cys894, Cys903, and His904 each contribute to the Zn(2+) site. A compositionally biased stretch (basic residues) spans 898–908; sequence RKYKQCHGKLS.

Belongs to the SecA family. In terms of assembly, monomer and homodimer. Part of the essential Sec protein translocation apparatus which comprises SecA, SecYEG and auxiliary proteins SecDF-YajC and YidC. Zn(2+) serves as cofactor.

The protein resides in the cell inner membrane. It is found in the cytoplasm. It catalyses the reaction ATP + H2O + cellular proteinSide 1 = ADP + phosphate + cellular proteinSide 2.. Functionally, part of the Sec protein translocase complex. Interacts with the SecYEG preprotein conducting channel. Has a central role in coupling the hydrolysis of ATP to the transfer of proteins into and across the cell membrane, serving both as a receptor for the preprotein-SecB complex and as an ATP-driven molecular motor driving the stepwise translocation of polypeptide chains across the membrane. This chain is Protein translocase subunit SecA, found in Shewanella baltica (strain OS185).